Consider the following 102-residue polypeptide: RNA-binding protein Hfq (102 aa).

Positions 9-68 constitute a Sm domain; it reads DPFVNALRRERVPVSIYLVNGIKLQGQIESFDQFVILLKNTVSQMVYKHAISTVVPSRPV. The segment at 63–102 is disordered; it reads VPSRPVSHHSNNAGGGASNNYHHGSNAQGSTAQQDSEETE. Over residues 70-88 the composition is skewed to low complexity; it reads HHSNNAGGGASNNYHHGSN.

The protein belongs to the Hfq family. As to quaternary structure, homohexamer.

RNA chaperone that binds small regulatory RNA (sRNAs) and mRNAs to facilitate mRNA translational regulation in response to envelope stress, environmental stress and changes in metabolite concentrations. Also binds with high specificity to tRNAs. The protein is RNA-binding protein Hfq of Salmonella heidelberg (strain SL476).